Reading from the N-terminus, the 288-residue chain is ATP synthase gamma chain (288 aa).

The protein belongs to the ATPase gamma chain family. F-type ATPases have 2 components, CF(1) - the catalytic core - and CF(0) - the membrane proton channel. CF(1) has five subunits: alpha(3), beta(3), gamma(1), delta(1), epsilon(1). CF(0) has three main subunits: a, b and c.

The protein localises to the cell inner membrane. In terms of biological role, produces ATP from ADP in the presence of a proton gradient across the membrane. The gamma chain is believed to be important in regulating ATPase activity and the flow of protons through the CF(0) complex. The chain is ATP synthase gamma chain from Acidithiobacillus ferrooxidans (strain ATCC 23270 / DSM 14882 / CIP 104768 / NCIMB 8455) (Ferrobacillus ferrooxidans (strain ATCC 23270)).